The sequence spans 120 residues: Host cell factor C1 regulator 1 (120 aa).

The tract at residues 1–30 is disordered; sequence MILQQPLERGPPSRDPRATTGVTRGLNASL. Residues 20–30 show a composition bias toward polar residues; that stretch reads TGVTRGLNASL. Positions 58–61 are interaction with HCFC1; it reads DHPY. The Nuclear export signal motif lies at 92–101; the sequence is IPEALRLLRL.

In terms of assembly, interacts with HCFC1.

It is found in the cytoplasm. The protein resides in the nucleus. Its function is as follows. Regulates HCFC1 activity by modulating its subcellular localization. Overexpression of HCFC1R1 leads to accumulation of HCFC1 in the cytoplasm. HCFC1R1-mediated export may provide the pool of cytoplasmic HCFC1 required for import of virion-derived VP16 into the nucleus. The polypeptide is Host cell factor C1 regulator 1 (Hcfc1r1) (Mus musculus (Mouse)).